A 432-amino-acid polypeptide reads, in one-letter code: Pentatricopeptide repeat-containing protein 2, mitochondrial (432 aa).

The N-terminal 33 residues, methionine 1–serine 33, are a transit peptide targeting the mitochondrion. PPR repeat units follow at residues lysine 108–proline 142, serine 143–serine 179, asparagine 360–proline 394, and threonine 395–valine 429.

It localises to the mitochondrion. Functionally, mitochondrial RNA-binding protein that acts as a general translation factor. Plays a critical role in the synthesis of all mitochondrial DNA-encoded oxidative phosphorylation subunits, which are essential for mitochondrial respiration. Essential for the expression of iron-sulfur cluster (ISC) proteins as well as other heme proteins related to iron-sensing, and thus plays a key role in iron homeostasis. The chain is Pentatricopeptide repeat-containing protein 2, mitochondrial from Schizosaccharomyces pombe (strain 972 / ATCC 24843) (Fission yeast).